Reading from the N-terminus, the 131-residue chain is Profilin (131 aa).

Belongs to the profilin family. In terms of assembly, occurs in many kinds of cells as a complex with monomeric actin in a 1:1 ratio.

It localises to the cytoplasm. The protein localises to the cytoskeleton. In terms of biological role, binds to actin and affects the structure of the cytoskeleton. At high concentrations, profilin prevents the polymerization of actin, whereas it enhances it at low concentrations. By binding to PIP2, it inhibits the formation of IP3 and DG. This Arachis hypogaea (Peanut) protein is Profilin.